Reading from the N-terminus, the 145-residue chain is Protein SprT-like (145 aa).

In terms of domain architecture, SprT-like spans 5–140 (DYVREVSLAD…ACGRCHGRLI (136 aa)). A Zn(2+)-binding site is contributed by His64. Glu65 is an active-site residue. Residue His68 participates in Zn(2+) binding.

This sequence belongs to the SprT family. Zn(2+) serves as cofactor.

The protein localises to the cytoplasm. In Streptococcus equi subsp. zooepidemicus (strain MGCS10565), this protein is Protein SprT-like.